The primary structure comprises 160 residues: Cytochrome b6-f complex subunit 4 (160 aa).

3 consecutive transmembrane segments (helical) span residues 36-56 (LLYI…GLAV), 95-115 (LLGV…PFLE), and 131-151 (TVFL…TLPI).

It belongs to the cytochrome b family. PetD subfamily. In terms of assembly, the 4 large subunits of the cytochrome b6-f complex are cytochrome b6, subunit IV (17 kDa polypeptide, petD), cytochrome f and the Rieske protein, while the 4 small subunits are petG, petL, petM and petN. The complex functions as a dimer.

The protein localises to the plastid. The protein resides in the chloroplast thylakoid membrane. Component of the cytochrome b6-f complex, which mediates electron transfer between photosystem II (PSII) and photosystem I (PSI), cyclic electron flow around PSI, and state transitions. The chain is Cytochrome b6-f complex subunit 4 from Lotus japonicus (Lotus corniculatus var. japonicus).